The following is a 331-amino-acid chain: Major outer membrane protein P.IB (331 aa).

A signal peptide spans 1-19 (MKKSLIALTLAALPVAAMA).

The protein belongs to the Gram-negative porin family. As to quaternary structure, homotrimer.

It is found in the cell outer membrane. In terms of biological role, serves as a slightly cation selective porin. The protein is Major outer membrane protein P.IB (porB) of Neisseria meningitidis serogroup B.